A 415-amino-acid chain; its full sequence is Imidazolonepropionase (415 aa).

2 residues coordinate Fe(3+): histidine 83 and histidine 85. Zn(2+) contacts are provided by histidine 83 and histidine 85. Positions 92, 155, and 188 each coordinate 4-imidazolone-5-propanoate. Tyrosine 155 serves as a coordination point for N-formimidoyl-L-glutamate. Histidine 250 contributes to the Fe(3+) binding site. Residue histidine 250 participates in Zn(2+) binding. A 4-imidazolone-5-propanoate-binding site is contributed by glutamine 253. Position 324 (aspartate 324) interacts with Fe(3+). Zn(2+) is bound at residue aspartate 324. N-formimidoyl-L-glutamate is bound by residues asparagine 326 and glycine 328. Serine 329 contacts 4-imidazolone-5-propanoate.

This sequence belongs to the metallo-dependent hydrolases superfamily. HutI family. Requires Zn(2+) as cofactor. Fe(3+) serves as cofactor.

The protein resides in the cytoplasm. The catalysed reaction is 4-imidazolone-5-propanoate + H2O = N-formimidoyl-L-glutamate. Its pathway is amino-acid degradation; L-histidine degradation into L-glutamate; N-formimidoyl-L-glutamate from L-histidine: step 3/3. Catalyzes the hydrolytic cleavage of the carbon-nitrogen bond in imidazolone-5-propanoate to yield N-formimidoyl-L-glutamate. It is the third step in the universal histidine degradation pathway. This Rubrobacter xylanophilus (strain DSM 9941 / JCM 11954 / NBRC 16129 / PRD-1) protein is Imidazolonepropionase.